The primary structure comprises 175 residues: Deoxyuridine 5'-triphosphate nucleotidohydrolase (175 aa).

Residues 67–69 (RSG), N80, 84–86 (TVD), and K94 contribute to the substrate site. The segment at 138 to 175 (RAEGGFGSTGGHAAVGADTNGQQGGNRYASVVSDRKGQ) is disordered.

Belongs to the dUTPase family. Requires Mg(2+) as cofactor.

The catalysed reaction is dUTP + H2O = dUMP + diphosphate + H(+). It participates in pyrimidine metabolism; dUMP biosynthesis; dUMP from dCTP (dUTP route): step 2/2. In terms of biological role, this enzyme is involved in nucleotide metabolism: it produces dUMP, the immediate precursor of thymidine nucleotides and it decreases the intracellular concentration of dUTP so that uracil cannot be incorporated into DNA. This is Deoxyuridine 5'-triphosphate nucleotidohydrolase from Streptomyces avermitilis (strain ATCC 31267 / DSM 46492 / JCM 5070 / NBRC 14893 / NCIMB 12804 / NRRL 8165 / MA-4680).